Here is a 343-residue protein sequence, read N- to C-terminus: N6-succino-2-amino-2'-deoxyadenylate synthase (343 aa).

Ser-14 (proton acceptor) is an active-site residue. Residues Ser-14, Thr-15, Gly-16, Lys-17, and Gly-18 each coordinate ATP. Ser-14 provides a ligand contact to dGMP. Ser-14 serves as a coordination point for Mg(2+). Asn-40 contacts dGMP. Residues Gly-42, His-43, and Thr-44 each contribute to the ATP site. A Mg(2+)-binding site is contributed by Gly-42. DGMP contacts are provided by Ser-127, Thr-128, and Arg-142. Residue Gln-187 participates in ATP binding. Thr-202 serves as a coordination point for dGMP. Thr-263 lines the Mg(2+) pocket. Positions 263, 264, and 269 each coordinate L-aspartate. ATP contacts are provided by Asn-294, Asn-297, and Gly-330.

Belongs to the Caudovirales PurZ family. It depends on Mg(2+) as a cofactor.

It carries out the reaction dGMP + L-aspartate + ATP = (2S)-2-amino-2'-deoxyadenylo-succinate + ADP + phosphate + 2 H(+). The protein operates within purine metabolism. Its function is as follows. Involved in the synthesis of the atypical nucleotide dZTP (2-amino-2'-deoxyadenosine-5'-triphosphate). Catalyzes the condensation of aspartate with deoxyguanylate into dSMP (N6-succino-2-amino-2'-deoxyadenylate), which undergoes defumarylation and phosphorylation respectively by host PurB and guanylate/nucleoside diphosphate kinases to give dZTP. dZTP is integrated into the viral genome instead of adenine by the viral DNA polymerase. This Z-base probably completely replaces adenosine and forms a triple bond to the opposite T-base. The resulting non-standard viral DNA is called Z-genome. The chemically modified DNA is probably harder for the host bacteria to digest with nucleases or restriction enzymes. This Vibrio phage phiVC8 protein is N6-succino-2-amino-2'-deoxyadenylate synthase.